The chain runs to 333 residues: Acetoin:2,6-dichlorophenolindophenol oxidoreductase subunit alpha (333 aa).

In terms of assembly, tetramer of 2 alpha and 2 beta subunits. Thiamine diphosphate serves as cofactor.

It participates in ketone degradation; acetoin degradation. Catalyzes the 2,6-dichlorophenolindophenol-dependent cleavage of acetoin into acetate and acetaldehyde, in vitro. The alpha subunit is probably the catalytic subunit of the enzyme. This chain is Acetoin:2,6-dichlorophenolindophenol oxidoreductase subunit alpha (acoA), found in Cupriavidus necator (strain ATCC 17699 / DSM 428 / KCTC 22496 / NCIMB 10442 / H16 / Stanier 337) (Ralstonia eutropha).